The chain runs to 369 residues: Phenylalanine--tRNA ligase alpha subunit (369 aa).

Glu-269 provides a ligand contact to Mg(2+).

It belongs to the class-II aminoacyl-tRNA synthetase family. Phe-tRNA synthetase alpha subunit type 1 subfamily. As to quaternary structure, tetramer of two alpha and two beta subunits. The cofactor is Mg(2+).

Its subcellular location is the cytoplasm. The catalysed reaction is tRNA(Phe) + L-phenylalanine + ATP = L-phenylalanyl-tRNA(Phe) + AMP + diphosphate + H(+). The polypeptide is Phenylalanine--tRNA ligase alpha subunit (Brucella melitensis biotype 1 (strain ATCC 23456 / CCUG 17765 / NCTC 10094 / 16M)).